The sequence spans 208 residues: ATP-dependent Clp protease proteolytic subunit (208 aa).

S105 acts as the Nucleophile in catalysis. H130 is a catalytic residue.

Belongs to the peptidase S14 family. As to quaternary structure, fourteen ClpP subunits assemble into 2 heptameric rings which stack back to back to give a disk-like structure with a central cavity, resembling the structure of eukaryotic proteasomes.

It is found in the cytoplasm. The catalysed reaction is Hydrolysis of proteins to small peptides in the presence of ATP and magnesium. alpha-casein is the usual test substrate. In the absence of ATP, only oligopeptides shorter than five residues are hydrolyzed (such as succinyl-Leu-Tyr-|-NHMec, and Leu-Tyr-Leu-|-Tyr-Trp, in which cleavage of the -Tyr-|-Leu- and -Tyr-|-Trp bonds also occurs).. Cleaves peptides in various proteins in a process that requires ATP hydrolysis. Has a chymotrypsin-like activity. Plays a major role in the degradation of misfolded proteins. This Xylella fastidiosa (strain M23) protein is ATP-dependent Clp protease proteolytic subunit.